The following is a 59-amino-acid chain: UPF0434 protein VC_1876 (59 aa).

The protein belongs to the UPF0434 family.

The chain is UPF0434 protein VC_1876 from Vibrio cholerae serotype O1 (strain ATCC 39315 / El Tor Inaba N16961).